The chain runs to 1127 residues: Disease resistance protein RPS6 (1127 aa).

The residue at position 1 (methionine 1) is an N-acetylmethionine. Residues 12 to 176 enclose the TIR domain; the sequence is WSYHVFPSFS…EIANDILGKM (165 aa). Glutamate 87 is an active-site residue. 11 LRR repeats span residues 197 to 221, 540 to 563, 587 to 609, 610 to 632, 633 to 656, 658 to 679, 680 to 704, 766 to 790, 791 to 813, 814 to 834, and 835 to 857; these read MSSLLHLESEEVRMVGIWGPSGIGK, IDETDELHIHESSFKGMHNLLFLK, PSRLRLLRFDRYPSKCLPSNFHP, ENLVKLQMQQSKLEKLWDGVHSL, AGLRNMDLRGSRNLKEIPDLSMAT, LETLKLSSCSSLVELPSSIQYL, NKLNDLDMSYCDHLETIPSGVNLKS, SPTLTRLTFSNNPSFVEVPSSIQNL, YQLEHLEIMNCRNLVTLPTGINL, DSLISLDLSHCSQLKTFPDIS, and TNISDLNLSYTAIEEVPLSIEKL.

As to quaternary structure, interacts with EDS1. In terms of tissue distribution, ubiquitous.

The catalysed reaction is NAD(+) + H2O = ADP-D-ribose + nicotinamide + H(+). Disease resistance (R) protein that specifically recognizes the hopA1 type III effector avirulence protein from Pseudomonas syringae. Resistance proteins guard the plant against pathogens that contain an appropriate avirulence protein via an indirect interaction with this avirulence protein. That triggers a defense system including the hypersensitive response, which restricts the pathogen growth. The sequence is that of Disease resistance protein RPS6 from Arabidopsis thaliana (Mouse-ear cress).